Consider the following 314-residue polypeptide: Ribosomal RNA large subunit methyltransferase F (314 aa).

This sequence belongs to the methyltransferase superfamily. METTL16/RlmF family.

Its subcellular location is the cytoplasm. The catalysed reaction is adenosine(1618) in 23S rRNA + S-adenosyl-L-methionine = N(6)-methyladenosine(1618) in 23S rRNA + S-adenosyl-L-homocysteine + H(+). Specifically methylates the adenine in position 1618 of 23S rRNA. This chain is Ribosomal RNA large subunit methyltransferase F, found in Flavobacterium psychrophilum (strain ATCC 49511 / DSM 21280 / CIP 103535 / JIP02/86).